The primary structure comprises 251 residues: Ubiquinone/menaquinone biosynthesis C-methyltransferase UbiE (251 aa).

S-adenosyl-L-methionine contacts are provided by residues Thr74, Asp95, and 123–124; that span reads DA.

Belongs to the class I-like SAM-binding methyltransferase superfamily. MenG/UbiE family.

The catalysed reaction is a 2-demethylmenaquinol + S-adenosyl-L-methionine = a menaquinol + S-adenosyl-L-homocysteine + H(+). The enzyme catalyses a 2-methoxy-6-(all-trans-polyprenyl)benzene-1,4-diol + S-adenosyl-L-methionine = a 5-methoxy-2-methyl-3-(all-trans-polyprenyl)benzene-1,4-diol + S-adenosyl-L-homocysteine + H(+). The protein operates within quinol/quinone metabolism; menaquinone biosynthesis; menaquinol from 1,4-dihydroxy-2-naphthoate: step 2/2. Its pathway is cofactor biosynthesis; ubiquinone biosynthesis. Functionally, methyltransferase required for the conversion of demethylmenaquinol (DMKH2) to menaquinol (MKH2) and the conversion of 2-polyprenyl-6-methoxy-1,4-benzoquinol (DDMQH2) to 2-polyprenyl-3-methyl-6-methoxy-1,4-benzoquinol (DMQH2). The polypeptide is Ubiquinone/menaquinone biosynthesis C-methyltransferase UbiE (Idiomarina loihiensis (strain ATCC BAA-735 / DSM 15497 / L2-TR)).